The following is a 272-amino-acid chain: 3-methyl-2-oxobutanoate hydroxymethyltransferase (272 aa).

Mg(2+)-binding residues include Asp43 and Asp82. Residues 43-44 (DS), Asp82, and Lys112 each bind 3-methyl-2-oxobutanoate. Glu114 lines the Mg(2+) pocket. Catalysis depends on Glu179, which acts as the Proton acceptor.

This sequence belongs to the PanB family. As to quaternary structure, homodecamer; pentamer of dimers. Mg(2+) serves as cofactor.

The protein localises to the cytoplasm. It catalyses the reaction 3-methyl-2-oxobutanoate + (6R)-5,10-methylene-5,6,7,8-tetrahydrofolate + H2O = 2-dehydropantoate + (6S)-5,6,7,8-tetrahydrofolate. Its pathway is cofactor biosynthesis; (R)-pantothenate biosynthesis; (R)-pantoate from 3-methyl-2-oxobutanoate: step 1/2. Catalyzes the reversible reaction in which hydroxymethyl group from 5,10-methylenetetrahydrofolate is transferred onto alpha-ketoisovalerate to form ketopantoate. In Staphylococcus aureus (strain MRSA252), this protein is 3-methyl-2-oxobutanoate hydroxymethyltransferase.